The chain runs to 303 residues: D-alanyl-D-alanine carboxypeptidase (303 aa).

A helical transmembrane segment spans residues 7–23; that stretch reads LLLLLFLIYLGYDYVNE. The interval 37-56 is disordered; that stretch reads DQNPKEHLENSGTSENTQEK. Residues 154-156 and Ser-161 contribute to the substrate site; that span reads YAL. His-163 and Asp-170 together coordinate Zn(2+). Glu-213 acts as the Proton donor/acceptor in catalysis. His-216 is a Zn(2+) binding site.

This sequence belongs to the peptidase M15B family. Zn(2+) is required as a cofactor.

Its subcellular location is the cell membrane. Its activity is regulated as follows. The DD-carboxypeptidase activity is not inhibited by beta-lactam antibiotics. Cleaves the C-terminal D-alanine residue of UDP-muramyl-pentapeptide (UDP-MurNAc-L-Ala-D-Glu-mDAP-D-Ala-D-Ala) or diacetyl-L-Lys-D-Ala-D-Ala. However the physiological substrate likely contains L-Lys instead of mDAP at the third position of the pentapeptide. Also releases the C-terminal D-lactate from UDP-MurNAc-L-Ala-D-Glu-mDAP-D-Ala-D-lactate, a depsipeptide produced by the vancomycin resistance protein VanA. Therefore, VanY should contribute in vivo to the hydrolysis of both the D-alanyl-D-alanine- and the depsipeptide-containing peptidoglycan precursors. Is not necessary for vancomycin resistance of E.faecium BM4147 and perhaps not W14-9. Does not display transpeptidase or beta-lactamase activities. The protein is D-alanyl-D-alanine carboxypeptidase of Enterococcus faecium (Streptococcus faecium).